Reading from the N-terminus, the 290-residue chain is NAD kinase (290 aa).

Asp75 serves as the catalytic Proton acceptor. NAD(+)-binding positions include 75–76, 148–149, Asp178, 189–194, and Gln247; these read DG, NE, and TAYNIS.

It belongs to the NAD kinase family. The cofactor is a divalent metal cation.

It localises to the cytoplasm. It catalyses the reaction NAD(+) + ATP = ADP + NADP(+) + H(+). Its function is as follows. Involved in the regulation of the intracellular balance of NAD and NADP, and is a key enzyme in the biosynthesis of NADP. Catalyzes specifically the phosphorylation on 2'-hydroxyl of the adenosine moiety of NAD to yield NADP. In Wolinella succinogenes (strain ATCC 29543 / DSM 1740 / CCUG 13145 / JCM 31913 / LMG 7466 / NCTC 11488 / FDC 602W) (Vibrio succinogenes), this protein is NAD kinase.